The primary structure comprises 342 residues: GTPase Obg (342 aa).

An Obg domain is found at 1-159 (MQFIDRAEIE…RHLRLELKLL (159 aa)). Residues 160–328 (AEVGIIGLPN…LLAKVWQQLE (169 aa)) form the OBG-type G domain. Residues 166-173 (GLPNAGKS), 191-195 (FTTLI), 213-216 (DIPG), 280-283 (NKID), and 309-311 (SAV) each bind GTP. 2 residues coordinate Mg(2+): S173 and T193.

This sequence belongs to the TRAFAC class OBG-HflX-like GTPase superfamily. OBG GTPase family. In terms of assembly, monomer. It depends on Mg(2+) as a cofactor.

The protein resides in the cytoplasm. Its function is as follows. An essential GTPase which binds GTP, GDP and possibly (p)ppGpp with moderate affinity, with high nucleotide exchange rates and a fairly low GTP hydrolysis rate. Plays a role in control of the cell cycle, stress response, ribosome biogenesis and in those bacteria that undergo differentiation, in morphogenesis control. The protein is GTPase Obg of Microcystis aeruginosa (strain NIES-843 / IAM M-2473).